The following is a 343-amino-acid chain: tRNA N6-adenosine threonylcarbamoyltransferase (343 aa).

Positions 115 and 119 each coordinate Fe cation. Substrate contacts are provided by residues 138–142, D171, G184, and N276; that span reads LVSGA. Residue D304 participates in Fe cation binding.

The protein belongs to the KAE1 / TsaD family. It depends on Fe(2+) as a cofactor.

Its subcellular location is the cytoplasm. The enzyme catalyses L-threonylcarbamoyladenylate + adenosine(37) in tRNA = N(6)-L-threonylcarbamoyladenosine(37) in tRNA + AMP + H(+). Required for the formation of a threonylcarbamoyl group on adenosine at position 37 (t(6)A37) in tRNAs that read codons beginning with adenine. Is involved in the transfer of the threonylcarbamoyl moiety of threonylcarbamoyl-AMP (TC-AMP) to the N6 group of A37, together with TsaE and TsaB. TsaD likely plays a direct catalytic role in this reaction. This chain is tRNA N6-adenosine threonylcarbamoyltransferase, found in Buchnera aphidicola subsp. Cinara cedri (strain Cc).